We begin with the raw amino-acid sequence, 202 residues long: Na(+)-translocating NADH-quinone reductase subunit E (202 aa).

Helical transmembrane passes span 11 to 31 (SVFV…FLAI), 35 to 55 (IDAA…TVPV), 81 to 101 (FLGL…MEMV), 114 to 134 (GVFL…LLMV), 144 to 164 (VVFG…LAGI), and 182 to 202 (ITFI…GIAL).

It belongs to the NqrDE/RnfAE family. In terms of assembly, composed of six subunits; NqrA, NqrB, NqrC, NqrD, NqrE and NqrF.

Its subcellular location is the cell inner membrane. It catalyses the reaction a ubiquinone + n Na(+)(in) + NADH + H(+) = a ubiquinol + n Na(+)(out) + NAD(+). Functionally, NQR complex catalyzes the reduction of ubiquinone-1 to ubiquinol by two successive reactions, coupled with the transport of Na(+) ions from the cytoplasm to the periplasm. NqrA to NqrE are probably involved in the second step, the conversion of ubisemiquinone to ubiquinol. This is Na(+)-translocating NADH-quinone reductase subunit E from Saccharophagus degradans (strain 2-40 / ATCC 43961 / DSM 17024).